A 302-amino-acid polypeptide reads, in one-letter code: MDLSGCGTALITPFRADESIDEPALRALVDWQIASGIDWLVACGTTAETPTLTHDEWLRVIRIIAEQAAGRVPVWAGCTHNATRQAVENARQAAQIPGVTAILVANPYYNKPTQQGLYEHFLAVARAVELPVVLYNIPSRTGCNLEPETVLRLVGAAPNIAAIKESSSNLPQIGELLTRAPESFRVYSGDDNMALGTIALGGAGLVSVASNEIPREMAEMVRAAVQNDWALARQLHRKYFPLLQANFLETSPGPVKAVLAMMGRIEERYRLPMTPVSSATRARLERLAGELGLLVETPVPQR.

Thr-46 provides a ligand contact to pyruvate. Tyr-135 acts as the Proton donor/acceptor in catalysis. Lys-164 serves as the catalytic Schiff-base intermediate with substrate. Val-206 is a binding site for pyruvate.

It belongs to the DapA family. As to quaternary structure, homotetramer; dimer of dimers.

It is found in the cytoplasm. It catalyses the reaction L-aspartate 4-semialdehyde + pyruvate = (2S,4S)-4-hydroxy-2,3,4,5-tetrahydrodipicolinate + H2O + H(+). It participates in amino-acid biosynthesis; L-lysine biosynthesis via DAP pathway; (S)-tetrahydrodipicolinate from L-aspartate: step 3/4. Its function is as follows. Catalyzes the condensation of (S)-aspartate-beta-semialdehyde [(S)-ASA] and pyruvate to 4-hydroxy-tetrahydrodipicolinate (HTPA). This chain is 4-hydroxy-tetrahydrodipicolinate synthase, found in Acidobacterium capsulatum (strain ATCC 51196 / DSM 11244 / BCRC 80197 / JCM 7670 / NBRC 15755 / NCIMB 13165 / 161).